The sequence spans 486 residues: Maintenance of mitochondrial morphology protein 1 (486 aa).

The Lumenal portion of the chain corresponds to 1–20 (MNFQQSAIPPFSFLLSFTQG). The helical transmembrane segment at 21–41 (FLLGQLSVVLLIGAFIKFFIF) threads the bilayer. The Cytoplasmic portion of the chain corresponds to 42 to 486 (GEAPPPPSRG…GSLPDGAVGN (445 aa)). 3 disordered regions span residues 70-96 (TNEAGSRSLREKPSTSNVLRPVPSSST), 271-320 (TPPL…SPKS), and 387-486 (RTGV…AVGN). The segment covering 83–96 (STSNVLRPVPSSST) has biased composition (polar residues). Residues 128–379 (QPESLDWFNV…EPRVQVVGLP (252 aa)) form the SMP-LTD domain. Over residues 271–282 (TPPLHTPSPSPA) the composition is skewed to pro residues. Low complexity predominate over residues 292–306 (QSQPENNSSNPNQQS). Polar residues-rich tracts occupy residues 398–407 (TGSNAASRSA) and 440–450 (DSVSRSSSFNV). Residues 460–474 (MTREDSRGAISDDFH) show a composition bias toward basic and acidic residues.

It belongs to the MMM1 family. As to quaternary structure, homodimer. Component of the ER-mitochondria encounter structure (ERMES) or MDM complex, composed of mmm1, mdm10, mdm12 and mdm34. A mmm1 homodimer associates with one molecule of mdm12 on each side in a pairwise head-to-tail manner, and the SMP-LTD domains of mmm1 and mdm12 generate a continuous hydrophobic tunnel for phospholipid trafficking.

Its subcellular location is the endoplasmic reticulum membrane. In terms of biological role, component of the ERMES/MDM complex, which serves as a molecular tether to connect the endoplasmic reticulum (ER) and mitochondria. Components of this complex are involved in the control of mitochondrial shape and protein biogenesis, and function in nonvesicular lipid trafficking between the ER and mitochondria. The mdm12-mmm1 subcomplex functions in the major beta-barrel assembly pathway that is responsible for biogenesis of all outer membrane beta-barrel proteins, and acts in a late step after the SAM complex. The mdm10-mdm12-mmm1 subcomplex further acts in the TOM40-specific pathway after the action of the mdm12-mmm1 complex. Essential for establishing and maintaining the structure of mitochondria and maintenance of mtDNA nucleoids. This is Maintenance of mitochondrial morphology protein 1 from Aspergillus terreus (strain NIH 2624 / FGSC A1156).